Here is a 353-residue protein sequence, read N- to C-terminus: Keratocan (353 aa).

An N-terminal signal peptide occupies residues 1–21 (MMTLKVCPSLLLLFLVHSVWT). In terms of domain architecture, LRRNT spans 34–72 (EHWSHYTFECPQECFCPPSFPNALYCDNKGLKEIPAIPA). Cystine bridges form between Cys43–Cys49 and Cys47–Cys59. LRR repeat units follow at residues 73 to 94 (RIWYLYLQNNLIETISEKPFVN), 97 to 118 (HLRWINLNKNKITNNGIESGVL), 123 to 143 (RLLYLFLEDNELEEVPAPLPV), 144 to 165 (GLEQLRLARNKISRIPEGVFSN), 168 to 188 (NLTMLDLHQNNLLDSALQSDT), 194 to 214 (SLMQLNIAKNSLKKMPLSIPA), 215 to 236 (NTLQLFLDNNSIEVIPENYFSA), and 239 to 259 (KVTFLRLNYNKLSDEGIPPNG). N-linked (GlcNAc...) (keratan sulfate) asparagine glycosylation is present at Asn94. Residue Asn168 is glycosylated (N-linked (GlcNAc...) asparagine). The N-linked (GlcNAc...) (keratan sulfate) asparagine glycan is linked to Asn223. Asn261 carries N-linked (GlcNAc...) (keratan sulfate) asparagine glycosylation. 2 LRR repeats span residues 264–283 (SILDLQLSHNQLTKIPPINA) and 284–305 (HLEHLHLDHNRIKSVNGTQICP). Asn299 is a glycosylation site (N-linked (GlcNAc...) asparagine). A disulfide bond links Cys304 and Cys344.

The protein belongs to the small leucine-rich proteoglycan (SLRP) family. SLRP class II subfamily. In terms of tissue distribution, cornea.

The protein resides in the secreted. It localises to the extracellular space. The protein localises to the extracellular matrix. In terms of biological role, plays an important role in generating and maintaining a transparent matrix within the corneal stroma. The chain is Keratocan (KERA) from Coturnix japonica (Japanese quail).